We begin with the raw amino-acid sequence, 570 residues long: Sulfite reductase [NADPH] hemoprotein beta-component (570 aa).

Positions 434, 440, 479, and 483 each coordinate [4Fe-4S] cluster. Cys483 serves as a coordination point for siroheme.

This sequence belongs to the nitrite and sulfite reductase 4Fe-4S domain family. Alpha(8)-beta(8). The alpha component is a flavoprotein, the beta component is a hemoprotein. It depends on siroheme as a cofactor. Requires [4Fe-4S] cluster as cofactor.

It catalyses the reaction hydrogen sulfide + 3 NADP(+) + 3 H2O = sulfite + 3 NADPH + 4 H(+). The protein operates within sulfur metabolism; hydrogen sulfide biosynthesis; hydrogen sulfide from sulfite (NADPH route): step 1/1. Component of the sulfite reductase complex that catalyzes the 6-electron reduction of sulfite to sulfide. This is one of several activities required for the biosynthesis of L-cysteine from sulfate. This chain is Sulfite reductase [NADPH] hemoprotein beta-component, found in Escherichia coli (strain ATCC 8739 / DSM 1576 / NBRC 3972 / NCIMB 8545 / WDCM 00012 / Crooks).